Consider the following 134-residue polypeptide: ATP synthase epsilon chain (134 aa).

Belongs to the ATPase epsilon chain family. In terms of assembly, F-type ATPases have 2 components, CF(1) - the catalytic core - and CF(0) - the membrane proton channel. CF(1) has five subunits: alpha(3), beta(3), gamma(1), delta(1), epsilon(1). CF(0) has three main subunits: a, b and c.

Its subcellular location is the cell inner membrane. In terms of biological role, produces ATP from ADP in the presence of a proton gradient across the membrane. This Solibacter usitatus (strain Ellin6076) protein is ATP synthase epsilon chain.